A 63-amino-acid chain; its full sequence is Large ribosomal subunit protein bL28 (63 aa).

The protein belongs to the bacterial ribosomal protein bL28 family.

The sequence is that of Large ribosomal subunit protein bL28 from Alkaliphilus metalliredigens (strain QYMF).